The primary structure comprises 387 residues: Protein RecA, chromosomal (387 aa).

Residue 80–87 (GPESSGKT) coordinates ATP. Residues 352 to 387 (EVAETTEDTSTKAKATKAKKEEKVVETEEIELELED) form a disordered region. Over residues 378-387 (TEEIELELED) the composition is skewed to acidic residues.

The protein belongs to the RecA family.

The protein resides in the cytoplasm. In terms of biological role, can catalyze the hydrolysis of ATP in the presence of single-stranded DNA, the ATP-dependent uptake of single-stranded DNA by duplex DNA, and the ATP-dependent hybridization of homologous single-stranded DNAs. It interacts with LexA causing its activation and leading to its autocatalytic cleavage. The sequence is that of Protein RecA, chromosomal from Lactococcus lactis subsp. lactis (strain IL1403) (Streptococcus lactis).